We begin with the raw amino-acid sequence, 57 residues long: Lantibiotic nukacin (57 aa).

Residues 1 to 30 (MENSKVMKDIEVANLLEEVQEDELNEVLGA) constitute a propeptide that is removed on maturation. The segment at residues 39–44 (TVSHDC) is a cross-link (beta-methyllanthionine (Thr-Cys)). Cross-links (lanthionine (Ser-Cys)) lie at residues 41–55 (SHDC…VFTC) and 48–56 (SFQFVFTCC). Residue Thr54 is modified to 2,3-didehydrobutyrine.

In terms of processing, maturation of lantibiotics involves the enzymatic conversion of Thr, and Ser into dehydrated AA and the formation of thioether bonds with cysteine. This is followed by membrane translocation and cleavage of the modified precursor.

The protein localises to the secreted. Lanthionine-containing peptide antibiotic (lantibiotic) active on Gram-positive bacteria. The bactericidal activity of lantibiotics is based on depolarization of energized bacterial cytoplasmic membranes, initiated by the formation of aqueous transmembrane pores. This is Lantibiotic nukacin from Staphylococcus simulans.